Here is a 366-residue protein sequence, read N- to C-terminus: GTPase Obg (366 aa).

One can recognise an Obg domain in the interval 1-162 (MRFVDEATIN…RRLRLELKIL (162 aa)). Residues 163 to 335 (ADAGLLGLPN…VVDAMWRLRD (173 aa)) form the OBG-type G domain. Residues 169 to 176 (GLPNAGKS), 194 to 198 (FTTLT), 218 to 221 (DIPG), 288 to 291 (NKID), and 316 to 318 (SAM) each bind GTP. Mg(2+) contacts are provided by serine 176 and threonine 196.

This sequence belongs to the TRAFAC class OBG-HflX-like GTPase superfamily. OBG GTPase family. Monomer. Mg(2+) is required as a cofactor.

It is found in the cytoplasm. In terms of biological role, an essential GTPase which binds GTP, GDP and possibly (p)ppGpp with moderate affinity, with high nucleotide exchange rates and a fairly low GTP hydrolysis rate. Plays a role in control of the cell cycle, stress response, ribosome biogenesis and in those bacteria that undergo differentiation, in morphogenesis control. This is GTPase Obg from Nitratidesulfovibrio vulgaris (strain ATCC 29579 / DSM 644 / CCUG 34227 / NCIMB 8303 / VKM B-1760 / Hildenborough) (Desulfovibrio vulgaris).